A 509-amino-acid chain; its full sequence is Phosphoprotein (509 aa).

Disordered regions lie at residues 33–84, 131–236, and 256–281; these read LESW…LGFR, VQAN…DGNS, and PESRWESSERNASVGSVPKSARSAKT. Over residues 44-65 the composition is skewed to polar residues; sequence GRATPNPDTSEGDHQNINQSCS. Residues 146–157 are compositionally biased toward acidic residues; it reads DGSDDSDVDSGP. The residue at position 151 (serine 151) is a Phosphoserine. Residues 178–187 are compositionally biased toward basic and acidic residues; it reads RSTDVEKLEG. Residues 221–236 are compositionally biased toward polar residues; that stretch reads SRPSAQSIKKGTDGNS. The interval 303–376 is multimerization; the sequence is SEFEYEDDLF…LSSIMIAIPG (74 aa). The tract at residues 459-509 is interaction with the nucleocapsid (N-RNA); that stretch reads SSRSVIRSIIKSSKLNIDHKDYLLDLLNDVKGSKDLKEFHKMLTAILAKQP.

Belongs to the morbillivirus P protein family. In terms of assembly, homotetramer. Interacts (via multimerization domain) with polymerase L; this interaction forms the polymerase L-P complex. Interacts (via N-terminus) with N0 (via Ncore); this interaction allows P to chaperon N0 to avoid N polymerization before encapsidation. Interacts (via C-terminus) with N-RNA template; this interaction positions the polymerase on the template for both transcription and replication. Interacts with host ISG15; this interaction disrupts the activity of the N0-P complex. In terms of processing, phosphorylation on serines by host CK2 is necessary for the formation of viral factories.

Its function is as follows. Essential cofactor of the RNA polymerase L that plays a central role in the transcription and replication by forming the polymerase complex with RNA polymerase L and recruiting L to the genomic N-RNA template for RNA synthesis. Also plays a central role in the encapsidation of nascent RNA chains by forming the encapsidation complex with the nucleocapsid protein N (N-P complex). Acts as a chaperone for newly synthesized free N protein, so-called N0, allowing encapsidation of nascent RNA chains during replication. The nucleoprotein protein N prevents excessive phosphorylation of P, which leads to down-regulation of viral transcription/ replication. Participates, together with N, in the formation of viral factories (viroplasms), which are large inclusions in the host cytoplasm where replication takes place. This is Phosphoprotein (P/V) from Capra hircus (Goat).